The primary structure comprises 88 residues: Small ribosomal subunit protein bS20 (88 aa).

Positions 1 to 27 (MANSKSAKKRALQSEKRRQHNASRRSM) are disordered.

Belongs to the bacterial ribosomal protein bS20 family.

Its function is as follows. Binds directly to 16S ribosomal RNA. In Shewanella putrefaciens (strain CN-32 / ATCC BAA-453), this protein is Small ribosomal subunit protein bS20.